The chain runs to 250 residues: Probable ABC transporter permease protein BAB2_1148 (250 aa).

Transmembrane regions (helical) follow at residues leucine 12–valine 32, valine 63–tryptophan 83, tryptophan 94–leucine 114, isoleucine 122–isoleucine 142, valine 172–alanine 192, and leucine 211–phenylalanine 231. In terms of domain architecture, ABC transmembrane type-1 spans isoleucine 56–leucine 236.

The protein belongs to the binding-protein-dependent transport system permease family. In terms of assembly, the complex is composed of two ATP-binding proteins (BAB2_1147), two transmembrane proteins (BAB2_1148) and a solute-binding protein (BAB2_1146).

It localises to the cell inner membrane. In terms of biological role, probably part of an ABC transporter complex. Probably responsible for the translocation of the substrate across the membrane. The chain is Probable ABC transporter permease protein BAB2_1148 from Brucella abortus (strain 2308).